The chain runs to 650 residues: Chaperone protein DnaK (650 aa).

Phosphothreonine; by autocatalysis is present on T200. Residues 611 to 634 show a composition bias toward low complexity; the sequence is AQQAGAAGAAGAAAEGASAQGGAQ. Residues 611–650 are disordered; sequence AQQAGAAGAAGAAAEGASAQGGAQPPDDVVDADFKEVKKD.

Belongs to the heat shock protein 70 family.

In terms of biological role, acts as a chaperone. This Burkholderia pseudomallei (strain 1710b) protein is Chaperone protein DnaK.